Here is a 396-residue protein sequence, read N- to C-terminus: ATP-dependent RNA helicase eIF4A (396 aa).

Residues 23–51 (YEFDDMNLNEKLLRGVFGYGFNKPSAIQQ) carry the Q motif motif. The Helicase ATP-binding domain maps to 54–223 (IMPIIEGNDV…AKFMQNPVRI (170 aa)). Residue 67–74 (AQSGTGKT) coordinates ATP. A DEAD box motif is present at residues 171–174 (DEAD). Residues 234-395 (GIKQFYVNVE…ELPSDIGTLF (162 aa)) form the Helicase C-terminal domain.

The protein belongs to the DEAD box helicase family. eIF4A subfamily. Component of the eIF4F complex, which composition varies with external and internal environmental conditions. It is composed of at least eIF4A, eIF4E and eIF4G.

It localises to the cytoplasm. The catalysed reaction is ATP + H2O = ADP + phosphate + H(+). Functionally, ATP-dependent RNA helicase which is a subunit of the eIF4F complex involved in cap recognition and is required for mRNA binding to ribosome. In the current model of translation initiation, eIF4A unwinds RNA secondary structures in the 5'-UTR of mRNAs which is necessary to allow efficient binding of the small ribosomal subunit, and subsequent scanning for the initiator codon. This is ATP-dependent RNA helicase eIF4A (TIF1) from Candida glabrata (strain ATCC 2001 / BCRC 20586 / JCM 3761 / NBRC 0622 / NRRL Y-65 / CBS 138) (Yeast).